Reading from the N-terminus, the 2771-residue chain is Kinesin-like protein KIN-12D (2771 aa).

Basic and acidic residues-rich tracts occupy residues 1 to 13 and 40 to 54; these read MSKETKLSRRDSD and KNPKHECGSKIDRTP. 2 disordered regions span residues 1 to 73 and 117 to 139; these read MSKE…TPDK and YSETNSTQNTPTKSVSKPPGSCY. The segment covering 118-131 has biased composition (polar residues); it reads SETNSTQNTPTKSV. The 338-residue stretch at 193-530 folds into the Kinesin motor domain; the sequence is NVQILIRVRP…LKFAQRAKLI (338 aa). Residue 274-281 coordinates ATP; it reads GQTGSGKT. Microtubules-binding regions lie at residues 400–404, 431–437, and 479–483; these read SSRSH, VDLAGSE, and HIPYR. Coiled-coil stretches lie at residues 1033–1110, 1267–1331, 1410–1505, 2108–2390, and 2512–2677; these read AATA…NEME, ELKQ…MKEK, IILL…YVEN, ELED…EQVK, and RERD…LAQE. Residues 2727 to 2736 show a composition bias toward basic residues; the sequence is LKGKAKSRRS. The interval 2727–2771 is disordered; sequence LKGKAKSRRSRNPERKMPSMPSPRRSWSQSPRSMSQVPFFSSLDR. Positions 2744–2762 are enriched in low complexity; it reads PSMPSPRRSWSQSPRSMSQ.

This sequence belongs to the TRAFAC class myosin-kinesin ATPase superfamily. Kinesin family. KIN-12 subfamily. In terms of tissue distribution, expressed in tissues enriched in dividing cells, such as root meristems, root primordia, and leaf primordia/young leaves.

The protein resides in the cytoplasm. The protein localises to the cytoskeleton. Its subcellular location is the phragmoplast. Involved in the spatial control of cytokinesis by a proper phragmoplast guidance. This is Kinesin-like protein KIN-12D from Arabidopsis thaliana (Mouse-ear cress).